The following is a 222-amino-acid chain: MASDVSSHLLTVTQSRWTIHHMYNKLLILALFTPVILESIIYVSGPQGGNVTLVSNFTSNISARWFRWDGNDSHLICFYKRGEGLSTPYVGLSLSCAANQITIFNLTLNDSGRYGAEGFTRSGENETFLWYNLTVKPKPLETTTASNVTTIVTTTPTVIGTKSNVTGNASLAPQLRAVAGFLNQTPRENNTHLALVGVIVFIALIVVCIMGWWKLLCSKPKL.

12 N-linked (GlcNAc...) asparagine; by host glycosylation sites follow: Asn-50, Asn-56, Asn-60, Asn-71, Asn-105, Asn-109, Asn-125, Asn-132, Asn-147, Asn-164, Asn-168, and Asn-189. The chain crosses the membrane as a helical span at residues 193–213 (LALVGVIVFIALIVVCIMGWW).

This sequence belongs to the RL11 family. In terms of assembly, interacts with host FLT3. In terms of processing, highly glycosylated.

It is found in the secreted. The protein localises to the host cell membrane. In terms of biological role, plays a role in modulating the host immune response and affecting host cytokine production. Structurally and functionally homolog of host CEACAM1, induces endothelial cell angiogenesis. Ligands for host FLT3 receptor, activates the PI3K/AKT and MAPK/ERK pathways. In turn, triggers hematopoietic progenitor cell and monocyte differentiation leading to virus reactivation. This Human cytomegalovirus (strain AD169) (HHV-5) protein is CEACAM1-like protein UL7 (UL7).